Consider the following 479-residue polypeptide: Anaerobic nitric oxide reductase flavorubredoxin (479 aa).

The tract at residues 30 to 210 (LRGSSYNSYL…PFSRLVTPKI (181 aa)) is zinc metallo-hydrolase. Residues His-79, Glu-81, Asp-83, His-147, Asp-166, and His-227 each coordinate Fe cation. Residues 254–393 (ITIFYDTMSN…LCRQHGRDIA (140 aa)) form the Flavodoxin-like domain. FMN is bound by residues 260–264 (TMSNN) and 342–369 (AFGSHGWSGGAVDRLSTRLQDAGFEMSL). Positions 423 to 474 (GPKMQCSVCQWIYDPALGEPLQDVAPGTPWSDVPDNFLCPECSLGKDVFDVL) constitute a Rubredoxin-like domain. Fe cation contacts are provided by Cys-428, Cys-431, Cys-461, and Cys-464.

The protein in the N-terminal section; belongs to the zinc metallo-hydrolase group 3 family. In terms of assembly, homotetramer. The cofactor is Fe cation. Requires FMN as cofactor.

It localises to the cytoplasm. It participates in nitrogen metabolism; nitric oxide reduction. Its function is as follows. Anaerobic nitric oxide reductase; uses NADH to detoxify nitric oxide (NO), protecting several 4Fe-4S NO-sensitive enzymes. Has at least 2 reductase partners, only one of which (NorW, flavorubredoxin reductase) has been identified. NO probably binds to the di-iron center; electrons enter from the NorW at rubredoxin and are transferred sequentially to the FMN center and the di-iron center. Also able to function as an aerobic oxygen reductase. In Salmonella arizonae (strain ATCC BAA-731 / CDC346-86 / RSK2980), this protein is Anaerobic nitric oxide reductase flavorubredoxin.